A 460-amino-acid polypeptide reads, in one-letter code: MLQIYNTLSKTKEVFTPLVGNQVRMYVCGMTVYDYCHLGHGRSMVAFDVITRWLRHRGYDLTYVRNITDIDDKIINRANENGEPFDVLTERMIAAMHEDEARLNILKPDQEPRATDHIAGMHAMIQTLIDKGYAYAPGNGDVYYRVGRFAGYGKLSRRRVEDLRIGARIEPGEAKEDPLDFVLWKGAKPGEPSWSSPWGEGRPGWHIECSVMSTCCLGDSFDIHGGGNDLEFPHHENEIAQSEAATGKPYAKSWLHCGMITINGEKMSKSLGNFFTIREVLEKYHPEVVRYLLIASHYRSPINYSEENLREAKAALDRFYNALKGLPEAAPAEAAEHVERFAAAMDDDFNTAGACSVLFELAREVNRLRDSDLPAAAALAARLKQLAGLLGVLQLEPEAFLQAGAEGKVDAAEVEALIQARLEARAAKNWAESDRIRDQLTAMGVVLEDGKGGTTWRLAD.

Residue Cys-28 participates in Zn(2+) binding. Positions 30–40 match the 'HIGH' region motif; that stretch reads MTVYDYCHLGH. Residues Cys-209, His-234, and Glu-238 each contribute to the Zn(2+) site. The short motif at 266 to 270 is the 'KMSKS' region element; it reads KMSKS. Residue Lys-269 coordinates ATP.

Belongs to the class-I aminoacyl-tRNA synthetase family. Monomer. The cofactor is Zn(2+).

It is found in the cytoplasm. It catalyses the reaction tRNA(Cys) + L-cysteine + ATP = L-cysteinyl-tRNA(Cys) + AMP + diphosphate. In Pseudomonas paraeruginosa (strain DSM 24068 / PA7) (Pseudomonas aeruginosa (strain PA7)), this protein is Cysteine--tRNA ligase.